Consider the following 458-residue polypeptide: MLKTIFSLIAIIPMTLSFKKQFFWTAFISSSFLMPFLFFIFTPLSFNSSFLMHLQNKLFGYDMISAPLVFLSLWMLPLMALASQHHMKKSPLSYQLLYITILIIMQTLLILTFLSTNLMNFYILFESSLIPILLIIFRWGNQKERINAGIYLSFYTLIGSLPLLASLLFLSNTLSTLYIPILMMESSEMYHSPILWLGCFSALLIKTPLYGFHLWLPKAHVEATIAGSMTLAALMLKLGGYGMIRLSLMPFLHSPKLSLILISIALWGAVMTSFICLRQTDLKALIAYSSVSHMGLMTASIMTLSLWGMSGAFIMMIAHGLSSSALFFLANSNYEKTNTRTIILLRHTQMLLPLTSLWWLFIILTNLAMPPSINFISEITIMSSLFLWSPLTFPFLALTMVITTTYSMSMFMLAQGKLSKMTKILSPFSTREHLTLFLHLFPMIAIMAYPNMIINIFC.

Helical transmembrane passes span 22 to 42 (FFWT…FIFT), 63 to 83 (MISA…ALAS), 96 to 116 (LLYI…FLST), 117 to 137 (NLMN…LIIF), 150 to 170 (IYLS…LLFL), 194 to 214 (ILWL…GFHL), 224 to 244 (TIAG…YGMI), 257 to 277 (LSLI…FICL), 284 to 306 (ALIA…TLSL), 311 to 333 (GAFI…ANSN), 350 to 370 (MLLP…LAMP), 391 to 413 (LTFP…MFML), and 434 to 454 (LTLF…NMII).

Belongs to the complex I subunit 4 family.

It is found in the mitochondrion membrane. The catalysed reaction is a ubiquinone + NADH + 5 H(+)(in) = a ubiquinol + NAD(+) + 4 H(+)(out). Its function is as follows. Core subunit of the mitochondrial membrane respiratory chain NADH dehydrogenase (Complex I) that is believed to belong to the minimal assembly required for catalysis. Complex I functions in the transfer of electrons from NADH to the respiratory chain. The immediate electron acceptor for the enzyme is believed to be ubiquinone. This is NADH-ubiquinone oxidoreductase chain 4 (MT-ND4) from Myxine glutinosa (Atlantic hagfish).